Here is a 662-residue protein sequence, read N- to C-terminus: Glutathione hydrolase 7 (662 aa).

Over 1–106 (MAAENEASQE…AAECSCRQDG (106 aa)) the chain is Cytoplasmic. Residues Ser-17, Ser-72, Ser-79, and Ser-83 each carry the phosphoserine modification. The segment at 26–90 (SFPRLPEDEP…DGSPLRETRK (65 aa)) is disordered. Positions 72 to 83 (SSSSEMGSQDGS) are enriched in low complexity. The helical; Signal-anchor for type II membrane protein transmembrane segment at 107–127 (LTVIVTACLTFATGVTVALVM) threads the bilayer. The Extracellular segment spans residues 128–662 (QIYFGDPQIF…SPDAAGATIL (535 aa)). N-linked (GlcNAc...) asparagine glycosylation is found at Asn-198, Asn-267, Asn-283, Asn-330, Asn-353, Asn-394, Asn-452, Asn-519, Asn-523, and Asn-586.

Belongs to the gamma-glutamyltransferase family. Interacts with TLCD3A. As to quaternary structure, heterodimer composed of the light and heavy chains. The active site is located in the light chain. In terms of processing, cleaved by autocatalysis into a large and a small subunit and the autocatalytic cleavage is essential to the functional activation of the enzyme. In terms of tissue distribution, widely expressed, but at low level, except in the airway epithelial cells. Detected in brain, heart, kidney, liver, lung, spleen, testis and trachea.

It is found in the membrane. It carries out the reaction an N-terminal (5-L-glutamyl)-[peptide] + an alpha-amino acid = 5-L-glutamyl amino acid + an N-terminal L-alpha-aminoacyl-[peptide]. It catalyses the reaction glutathione + H2O = L-cysteinylglycine + L-glutamate. The catalysed reaction is an S-substituted glutathione + H2O = an S-substituted L-cysteinylglycine + L-glutamate. Its pathway is sulfur metabolism; glutathione metabolism. In terms of biological role, hydrolyzes and transfers gamma-glutamyl moieties from glutathione and other gamma-glutamyl compounds to acceptors. This chain is Glutathione hydrolase 7, found in Homo sapiens (Human).